A 204-amino-acid chain; its full sequence is RNA-free ribonuclease P (204 aa).

The protein belongs to the HARP family.

The enzyme catalyses Endonucleolytic cleavage of RNA, removing 5'-extranucleotides from tRNA precursor.. In terms of biological role, RNA-free RNase P that catalyzes the removal of the 5'-leader sequence from pre-tRNA to produce the mature 5'-terminus. The protein is RNA-free ribonuclease P of Pyrococcus horikoshii (strain ATCC 700860 / DSM 12428 / JCM 9974 / NBRC 100139 / OT-3).